The sequence spans 188 residues: MSEMAELSELYEESSDLQMDVMPGEGDLPQMEVGSGSRELSLRPSRNGAQPQLEEEGPMEEEEAQPMAAPEGKRSLASGPNAGEQPGQVAGADFESEDEGEEFDDWEDDYDYPEEEQLSGAGYRVSAALEEADKMFLRTREPALDGGFQMHYEKTPFDQLAFIEELFSLMVVNRLTEELGCDEIIDRE.

Positions Met-1 to Gly-122 are disordered. 2 stretches are compositionally biased toward acidic residues: residues Leu-53 to Ala-64 and Phe-94 to Gln-117. Residues Glu-55–Ala-121 form an interaction with NR0B2 region. The LXCXE motif motif lies at Leu-179–Glu-183.

In terms of assembly, interacts via its LXCXE motif with the entire pocket region of RB1. Interacts with EP300, NR0B2 and TRIM27.

Its subcellular location is the nucleus. The protein localises to the cytoplasm. Its function is as follows. Interacts with RB1 and EP300 and acts as a repressor of MYOD1 transactivation. Inhibits EP300 and CBP histone acetyltransferase activity. May be involved in coupling cell cycle exit to the transcriptional activation of genes required for cellular differentiation. May act as a candidate coinhibitory factor for NR0B2 that can be directly linked to transcription inhibitory mechanisms. The sequence is that of EP300-interacting inhibitor of differentiation 1 from Pongo abelii (Sumatran orangutan).